Consider the following 101-residue polypeptide: Aspartyl/glutamyl-tRNA(Asn/Gln) amidotransferase subunit C (101 aa).

This sequence belongs to the GatC family. In terms of assembly, heterotrimer of A, B and C subunits.

The catalysed reaction is L-glutamyl-tRNA(Gln) + L-glutamine + ATP + H2O = L-glutaminyl-tRNA(Gln) + L-glutamate + ADP + phosphate + H(+). The enzyme catalyses L-aspartyl-tRNA(Asn) + L-glutamine + ATP + H2O = L-asparaginyl-tRNA(Asn) + L-glutamate + ADP + phosphate + 2 H(+). In terms of biological role, allows the formation of correctly charged Asn-tRNA(Asn) or Gln-tRNA(Gln) through the transamidation of misacylated Asp-tRNA(Asn) or Glu-tRNA(Gln) in organisms which lack either or both of asparaginyl-tRNA or glutaminyl-tRNA synthetases. The reaction takes place in the presence of glutamine and ATP through an activated phospho-Asp-tRNA(Asn) or phospho-Glu-tRNA(Gln). The protein is Aspartyl/glutamyl-tRNA(Asn/Gln) amidotransferase subunit C of Enterococcus faecalis (strain ATCC 700802 / V583).